The chain runs to 426 residues: Glutamate-1-semialdehyde 2,1-aminomutase (426 aa).

Lys-265 is subject to N6-(pyridoxal phosphate)lysine.

The protein belongs to the class-III pyridoxal-phosphate-dependent aminotransferase family. HemL subfamily. Pyridoxal 5'-phosphate is required as a cofactor.

It localises to the cytoplasm. It carries out the reaction (S)-4-amino-5-oxopentanoate = 5-aminolevulinate. It participates in porphyrin-containing compound metabolism; protoporphyrin-IX biosynthesis; 5-aminolevulinate from L-glutamyl-tRNA(Glu): step 2/2. The chain is Glutamate-1-semialdehyde 2,1-aminomutase from Hyperthermus butylicus (strain DSM 5456 / JCM 9403 / PLM1-5).